We begin with the raw amino-acid sequence, 352 residues long: MSGNTLGSLFRVTNFGESHGPAIGCVVDGCPPGLPLDAADIQRELDRRRPGTSRHVTQRQEADQVEILSGVYEGVTTGTPIGLLIRNIDARSKDYSNIADTFRPGHADYSYWKKFGQRDPRGGGRSSARLTAPTVAAGAIAKKWLAQQHGTIVRGYMSQLGPIEIPFVSWDEVPNNPFYAPNAAIVPELEAYMDALRRDGDSIGARIEVVAEHLPAGWGEPIYDRLDADIAHAMMGLNAVKGVSIGAGFGSITQRGSEHGDEITPDGFLSNHAGGVLGGISTGQPVTVSLAIKPTSSIRVERRSVNRAGEPVNVQTLGRHDPCVGIRATPIAEALLALVLIDHALRHRGQCG.

2 residues coordinate NADP(+): R48 and R54. Residues 125–127 (RSS), 238–239 (NA), G278, 293–297 (KPTSS), and R319 each bind FMN.

It belongs to the chorismate synthase family. In terms of assembly, homotetramer. FMNH2 is required as a cofactor.

It catalyses the reaction 5-O-(1-carboxyvinyl)-3-phosphoshikimate = chorismate + phosphate. It functions in the pathway metabolic intermediate biosynthesis; chorismate biosynthesis; chorismate from D-erythrose 4-phosphate and phosphoenolpyruvate: step 7/7. Functionally, catalyzes the anti-1,4-elimination of the C-3 phosphate and the C-6 proR hydrogen from 5-enolpyruvylshikimate-3-phosphate (EPSP) to yield chorismate, which is the branch point compound that serves as the starting substrate for the three terminal pathways of aromatic amino acid biosynthesis. This reaction introduces a second double bond into the aromatic ring system. In Bordetella avium (strain 197N), this protein is Chorismate synthase.